Here is a 115-residue protein sequence, read N- to C-terminus: Ig heavy chain V region PJ14 (115 aa).

The signal sequence occupies residues 1–19 (MAVLALLFCLVTFPSCILS). One can recognise an Ig-like domain in the interval 20–115 (QVQLKESGPG…TDDTARYYCA (96 aa)).

The polypeptide is Ig heavy chain V region PJ14 (Mus musculus (Mouse)).